The sequence spans 863 residues: Dynamin-3 (863 aa).

The 267-residue stretch at 28-294 (LLELPQIAVV…LTNHIRDTLP (267 aa)) folds into the Dynamin-type G domain. The G1 motif stretch occupies residues 38–45 (GGQSAGKS). 38-46 (GGQSAGKSS) contributes to the GTP binding site. The tract at residues 64–66 (VTR) is G2 motif. The G3 motif stretch occupies residues 136–139 (DLPG). A G4 motif region spans residues 205-208 (TKLD). Residue 205 to 211 (TKLDLMD) participates in GTP binding. Tyr231 carries the post-translational modification Phosphotyrosine. The tract at residues 235–238 (VNRS) is G5 motif. A GTP-binding site is contributed by 236–239 (NRSQ). N6-acetyllysine is present on Lys299. The 107-residue stretch at 515–621 (QVIRKGWLTV…WKASLLRAGV (107 aa)) folds into the PH domain. Tyr593 bears the Phosphotyrosine mark. At Lys594 the chain carries N6-acetyllysine. Disordered regions lie at residues 626–647 (SVGS…SMDP) and 742–863 (ATVS…SLLD). Polar residues predominate over residues 627–642 (VGSNKTENDENGQAEN). The GED domain maps to 653–744 (VETIRNLVDS…IIGDINTATV (92 aa)). 2 positions are modified to phosphoserine: Ser763 and Ser767. 2 stretches are compositionally biased toward pro residues: residues 791-816 (PAIP…PPFP) and 826-849 (PQVP…PSPT). Ser847 bears the Phosphoserine mark.

The protein belongs to the TRAFAC class dynamin-like GTPase superfamily. Dynamin/Fzo/YdjA family.

It localises to the cytoplasm. The protein resides in the cytoskeleton. The catalysed reaction is GTP + H2O = GDP + phosphate + H(+). Functionally, microtubule-associated force-producing protein involved in producing microtubule bundles and able to bind and hydrolyze GTP. Most probably involved in vesicular trafficking processes, in particular endocytosis. In Mus musculus (Mouse), this protein is Dynamin-3 (Dnm3).